Consider the following 240-residue polypeptide: Ubiquinone biosynthesis O-methyltransferase (240 aa).

Arg44, Gly64, Asp85, and Met129 together coordinate S-adenosyl-L-methionine.

Belongs to the methyltransferase superfamily. UbiG/COQ3 family.

The catalysed reaction is a 3-demethylubiquinol + S-adenosyl-L-methionine = a ubiquinol + S-adenosyl-L-homocysteine + H(+). The enzyme catalyses a 3-(all-trans-polyprenyl)benzene-1,2-diol + S-adenosyl-L-methionine = a 2-methoxy-6-(all-trans-polyprenyl)phenol + S-adenosyl-L-homocysteine + H(+). Its pathway is cofactor biosynthesis; ubiquinone biosynthesis. Its function is as follows. O-methyltransferase that catalyzes the 2 O-methylation steps in the ubiquinone biosynthetic pathway. This chain is Ubiquinone biosynthesis O-methyltransferase, found in Escherichia coli O9:H4 (strain HS).